A 617-amino-acid polypeptide reads, in one-letter code: Putative type VI secretion system protein VgrGA (617 aa).

Disordered stretches follow at residues 325 to 344 and 449 to 469; these read GQQP…TLSN and RTFH…TRTS.

The protein belongs to the VgrG protein family.

Functionally, a Vgr protein that is probably part of a type VI secretion system (T6SS). May be required for export of proteins involved in Rhs-mediated cellular contact-dependent growth inhibition (CDI). The protein is Putative type VI secretion system protein VgrGA (vgrGA) of Dickeya dadantii (strain 3937) (Erwinia chrysanthemi (strain 3937)).